A 596-amino-acid polypeptide reads, in one-letter code: Sensor protein ChvG (596 aa).

The segment at 1–22 is disordered; sequence MLKKTPETVSDSDDAEERGSER. Topologically, residues 1-47 are cytoplasmic; sequence MLKKTPETVSDSDDAEERGSERRHRIHPLTIIRRIFGNAVFSSLTRR. A helical transmembrane segment spans residues 48–68; it reads ILFFNVAATVVLVGGILYLNQ. Over 69 to 283 the chain is Periplasmic; sequence FREGLIDARV…VHAERLAIMR (215 aa). The helical transmembrane segment at 284–304 threads the bilayer; sequence VFGIATLVNIVLSLLLSSTIA. The HAMP domain occupies 301-356; it reads STIATPLRRLSAAAIRVRRGARTREEIPDFSARQDEIGNLSIALREMTTALYDRID. Residues 305-596 lie on the Cytoplasmic side of the membrane; the sequence is TPLRRLSAAA…SLPAAETHER (292 aa). One can recognise a Histidine kinase domain in the interval 364–592; it reads DVSHELKNPL…RFTLSLPAAE (229 aa). Phosphohistidine is present on His367.

The protein localises to the cell inner membrane. It catalyses the reaction ATP + protein L-histidine = ADP + protein N-phospho-L-histidine.. Its function is as follows. Member of a two-component regulatory system ChvG/ChvI. Activates ChvI by phosphorylation (Potential). This is Sensor protein ChvG (chvG) from Agrobacterium fabrum (strain C58 / ATCC 33970) (Agrobacterium tumefaciens (strain C58)).